Consider the following 156-residue polypeptide: Ribosomal RNA large subunit methyltransferase H (156 aa).

S-adenosyl-L-methionine-binding positions include Leu73, Gly104, and 123–128 (LSSLTL).

This sequence belongs to the RNA methyltransferase RlmH family. In terms of assembly, homodimer.

The protein localises to the cytoplasm. The catalysed reaction is pseudouridine(1915) in 23S rRNA + S-adenosyl-L-methionine = N(3)-methylpseudouridine(1915) in 23S rRNA + S-adenosyl-L-homocysteine + H(+). In terms of biological role, specifically methylates the pseudouridine at position 1915 (m3Psi1915) in 23S rRNA. This is Ribosomal RNA large subunit methyltransferase H from Neisseria meningitidis serogroup C / serotype 2a (strain ATCC 700532 / DSM 15464 / FAM18).